A 363-amino-acid chain; its full sequence is Fructose-bisphosphate aldolase (363 aa).

Arginine 56 and lysine 147 together coordinate substrate. The Proton acceptor role is filled by glutamate 188. Residue lysine 230 is the Schiff-base intermediate with dihydroxyacetone-P of the active site.

The protein belongs to the class I fructose-bisphosphate aldolase family.

The enzyme catalyses beta-D-fructose 1,6-bisphosphate = D-glyceraldehyde 3-phosphate + dihydroxyacetone phosphate. It participates in carbohydrate degradation; glycolysis; D-glyceraldehyde 3-phosphate and glycerone phosphate from D-glucose: step 4/4. This chain is Fructose-bisphosphate aldolase (FBPA), found in Echinococcus multilocularis (Fox tapeworm).